Here is an 876-residue protein sequence, read N- to C-terminus: uncharacterized protein (876 aa).

Residues 37–48 (DEDKSNNDDRRS) are compositionally biased toward basic and acidic residues. Disordered stretches follow at residues 37–67 (DEDK…KGSN), 112–155 (DESG…RNIK), 226–254 (KKKS…TKSQ), and 330–353 (MMMD…SRSI). 2 positions are modified to phosphoserine: serine 48 and serine 51. Residues 49-58 (LASILDSSSS) are compositionally biased toward low complexity. The segment covering 115 to 131 (GFTSDNNADYFSGNSYS) has biased composition (polar residues). A phosphoserine mark is found at serine 360, serine 510, serine 552, and serine 577. Residues 490–513 (PEVTKQKNTSGPKPGFSHSKSADA) form a disordered region. 2 disordered regions span residues 661–728 (ITGG…RSPQ) and 750–876 (RHSL…FGRL). Residues 689-699 (SKSKSRSSSKS) are compositionally biased toward basic residues. A compositionally biased stretch (low complexity) spans 717 to 726 (SSASASRSRS). Serine 775 bears the Phosphoserine mark. Composition is skewed to low complexity over residues 794 to 808 (NKDS…SSSL) and 842 to 854 (FSFF…SPSS).

This is an uncharacterized protein from Saccharomyces cerevisiae (strain ATCC 204508 / S288c) (Baker's yeast).